The chain runs to 406 residues: Luteothin monooxygenase (406 aa).

The heme b site is built by H98, R102, R296, G350, H353, and C355.

This sequence belongs to the cytochrome P450 family. As to quaternary structure, monomer. Heme b serves as cofactor.

It carries out the reaction luteothin + 4 reduced [2Fe-2S]-[ferredoxin] + 2 O2 + 4 H(+) = aureothin + 4 oxidized [2Fe-2S]-[ferredoxin] + 3 H2O. It participates in antibiotic biosynthesis. Its pathway is polyketide biosynthesis. Functionally, bifunctional cytochrome P450 protein involved in the biosynthesis of the antibiotic aureothin, a nitroaryl polyketide metabolite with antifungal, cytotoxic and insecticidal activities. Catalyzes the hydroxylation of luteothin (also called deoxyaureothin), leading to the formation of the intermediate (7R)-7-hydroxydeoxyaureothin, followed by the formation of the aureothin tetrahydrofuran ring, the final step in the biosynthesis of aureothin. This is Luteothin monooxygenase from Streptomyces thioluteus.